Here is a 603-residue protein sequence, read N- to C-terminus: MAISSASLISSFSHAETFTKHSKIDTVNTQNPILLISKCNSLRELMQIQAYAIKSHIEDVSFVAKLINFCTESPTESSMSYARHLFEAMSEPDIVIFNSMARGYSRFTNPLEVFSLFVEILEDGILPDNYTFPSLLKACAVAKALEEGRQLHCLSMKLGLDDNVYVCPTLINMYTECEDVDSARCVFDRIVEPCVVCYNAMITGYARRNRPNEALSLFREMQGKYLKPNEITLLSVLSSCALLGSLDLGKWIHKYAKKHSFCKYVKVNTALIDMFAKCGSLDDAVSIFEKMRYKDTQAWSAMIVAYANHGKAEKSMLMFERMRSENVQPDEITFLGLLNACSHTGRVEEGRKYFSQMVSKFGIVPSIKHYGSMVDLLSRAGNLEDAYEFIDKLPISPTPMLWRILLAACSSHNNLDLAEKVSERIFELDDSHGGDYVILSNLYARNKKWEYVDSLRKVMKDRKAVKVPGCSSIEVNNVVHEFFSGDGVKSATTKLHRALDEMVKELKLSGYVPDTSMVVHANMNDQEKEITLRYHSEKLAITFGLLNTPPGTTIRVVKNLRVCRDCHNAAKLISLIFGRKVVLRDVQRFHHFEDGKCSCGDFW.

The transit peptide at 1–38 (MAISSASLISSFSHAETFTKHSKIDTVNTQNPILLISK) directs the protein to the chloroplast. PPR repeat units follow at residues 93 to 127 (DIVI…GILP), 128 to 162 (DNYT…GLDD), 163 to 193 (NVYV…IVEP), 194 to 228 (CVVC…YLKP), 229 to 263 (NEIT…SFCK), 264 to 294 (YVKV…MRYK), 295 to 329 (DTQA…NVQP), 330 to 365 (DEIT…GIVP), 366 to 400 (SIKH…PTPM), and 432 to 466 (HGGD…KAVK). Residues 401–476 (LWRILLAACS…VPGCSSIEVN (76 aa)) are type E motif. The tract at residues 477–507 (NVVHEFFSGDGVKSATTKLHRALDEMVKELK) is type E(+) motif. The segment at 508–603 (LSGYVPDTSM…DGKCSCGDFW (96 aa)) is type DYW motif.

Belongs to the PPR family. PCMP-H subfamily.

It is found in the plastid. The protein localises to the chloroplast. In terms of biological role, involved in RNA editing event in chloroplasts. Required for the editing of a single site in ndhD transcript, which is a plastid-encoded subunits of the chloroplast NAD(P)H dehydrogenase (NDH) complex. Not essential for the activity of the NDH complex of the photosynthetic electron transport chain. The polypeptide is Pentatricopeptide repeat-containing protein At2g02980, chloroplastic (PCMP-H26) (Arabidopsis thaliana (Mouse-ear cress)).